The primary structure comprises 405 residues: Secreted aspartic protease 8 (405 aa).

Residues 1–23 (MVSIITFTKNVLVTLAFALLAQG) form the signal peptide. Residues 24-75 (LAIPEDIDKRAEKVVSLDFTVTRKPFNATAHGQHHQSQQQQQQQQQQPAQKR) constitute a propeptide, activation peptide. Residues 52–78 (TAHGQHHQSQQQQQQQQQQPAQKRGTV) are disordered. The span at 58 to 70 (HQSQQQQQQQQQQ) shows a compositional bias: low complexity. One can recognise a Peptidase A1 domain in the interval 89 to 392 (YAATITVGSN…DLDGNTISLA (304 aa)). Asp107 is a catalytic residue. 107-109 (DTG) contacts pepstatin A. The cysteines at positions 122 and 134 are disulfide-linked. Residues 160–161 (ED) and 292–296 (DSGTT) each bind pepstatin A. The active site involves Asp292. A disulfide bridge connects residues Cys327 and Cys358.

It belongs to the peptidase A1 family. Monomer.

Its subcellular location is the secreted. The catalysed reaction is Preferential cleavage at the carboxyl of hydrophobic amino acids, but fails to cleave 15-Leu-|-Tyr-16, 16-Tyr-|-Leu-17 and 24-Phe-|-Phe-25 of insulin B chain. Activates trypsinogen, and degrades keratin.. Functionally, secreted aspartic peptidases (SAPs) are a group of ten acidic hydrolases considered as key virulence factors. These enzymes supply the fungus with nutrient amino acids as well as are able to degrade the selected host's proteins involved in the immune defense. Moreover, acts toward human hemoglobin though limited proteolysis to generate a variety of antimicrobial hemocidins, enabling to compete with the other microorganisms of the same physiological niche using the microbicidal peptides generated from the host protein. Plays a key role in defense against host by cleaving histatin-5 (Hst 5), a peptide from human saliva that carries out fungicidal activity. The cleavage rate decreases in an order of SAP2 &gt; SAP9 &gt; SAP3 &gt; SAP7 &gt; SAP4 &gt; SAP1 &gt; SAP8. The hydrolysis of Hst 5 by SAP8 causes production of the DSHAKRHHGY, HHSHRGY and FHEKHHSHRGY peptides. This is Secreted aspartic protease 8 from Candida albicans (strain SC5314 / ATCC MYA-2876) (Yeast).